The following is a 493-amino-acid chain: Voltage-gated potassium channel regulatory subunit KCNF1 (493 aa).

Residues methionine 1–valine 183 are Cytoplasmic-facing. Residues valine 184–isoleucine 204 traverse the membrane as a helical segment. Residues proline 205–glutamate 223 are Extracellular-facing. Residues asparagine 224 to serine 244 form a helical membrane-spanning segment. At proline 245–histidine 249 the chain is on the cytoplasmic side. A helical transmembrane segment spans residues phenylalanine 250 to leucine 270. Residues threonine 271–valine 289 lie on the Extracellular side of the membrane. The chain crosses the membrane as a helical; Voltage-sensor span at residues glutamine 290 to leucine 310. At glutamine 311–leucine 324 the chain is on the cytoplasmic side. The helical transmembrane segment at glycine 325 to methionine 345 threads the bilayer. The Extracellular portion of the chain corresponds to glutamate 346–isoleucine 357. Positions proline 358–proline 378 form an intramembrane region, pore-forming. The short motif at threonine 370–aspartate 375 is the Selectivity filter element. The Extracellular segment spans residues lysine 379–leucine 385. A helical membrane pass occupies residues asparagine 386–isoleucine 406. The Cytoplasmic segment spans residues asparagine 407–lysine 493. Residues asparagine 433–lysine 468 form a disordered region.

Belongs to the potassium channel family. F (TC 1.A.1.2) subfamily. Kv5.1/KCNF1 sub-subfamily. Heterotetramer with KCNB1 or KCNB2. Expressed in brain namely in the piriform cortex, olfactory tubercle, and medial habenular nucleus. Also expressed in the medial amygdaloid nuclei and the lateral amygdaloid area.

It is found in the cell membrane. Functionally, regulatory alpha-subunit of the voltage-gated potassium (Kv) channel which, when coassembled with KCNB1 or KCNB2, can modulate their expression and their gating kinetics by acting on deactivation upon repolarization and inactivation during maintained depolarization. Accelerates inactivation but has relatively little effect on deactivation. Coexpression with KCNB1 or KCNB2 markedly slows inactivation. Each modulatory subunit has its own specific properties of regulation, and can lead to extensive inhibitions, to large changes in kinetics, and/or to large shifts in the voltage dependencies of the inactivation process. The gating kinetics depends on the nature and stoichiometry of the associated regulatory sunbunit. Fails to produce a potassium current when expressed alone. The protein is Voltage-gated potassium channel regulatory subunit KCNF1 of Rattus norvegicus (Rat).